We begin with the raw amino-acid sequence, 145 residues long: MIALIQRVSEANVVVDGETIGEIDKGLLVLLGVEREDDLAKMEKLATKVMSYRVFSDDNGKMNLNLEQAGGSLLVVSQFTLAADTGRGLRPSFSGAGTPEQARELYQAFVDFCLSKGVNTQTGEFAADMKVSLVNDGPVTFNLQV.

The short motif at 137–138 is the Gly-cisPro motif, important for rejection of L-amino acids element; it reads GP.

It belongs to the DTD family. In terms of assembly, homodimer.

Its subcellular location is the cytoplasm. The enzyme catalyses glycyl-tRNA(Ala) + H2O = tRNA(Ala) + glycine + H(+). It catalyses the reaction a D-aminoacyl-tRNA + H2O = a tRNA + a D-alpha-amino acid + H(+). An aminoacyl-tRNA editing enzyme that deacylates mischarged D-aminoacyl-tRNAs. Also deacylates mischarged glycyl-tRNA(Ala), protecting cells against glycine mischarging by AlaRS. Acts via tRNA-based rather than protein-based catalysis; rejects L-amino acids rather than detecting D-amino acids in the active site. By recycling D-aminoacyl-tRNA to D-amino acids and free tRNA molecules, this enzyme counteracts the toxicity associated with the formation of D-aminoacyl-tRNA entities in vivo and helps enforce protein L-homochirality. In Shewanella piezotolerans (strain WP3 / JCM 13877), this protein is D-aminoacyl-tRNA deacylase.